A 297-amino-acid chain; its full sequence is Light-independent protochlorophyllide reductase iron-sulfur ATP-binding protein (297 aa).

ATP-binding positions include 41 to 46 (GIGKST) and Lys-70. A Mg(2+)-binding site is contributed by Ser-45. Residues Cys-126 and Cys-160 each contribute to the [4Fe-4S] cluster site. ATP contacts are provided by residues 211–212 (NR) and 235–237 (PDL).

Belongs to the NifH/BchL/ChlL family. As to quaternary structure, homodimer. Protochlorophyllide reductase is composed of three subunits; BchL, BchN and BchB. [4Fe-4S] cluster serves as cofactor.

It carries out the reaction chlorophyllide a + oxidized 2[4Fe-4S]-[ferredoxin] + 2 ADP + 2 phosphate = protochlorophyllide a + reduced 2[4Fe-4S]-[ferredoxin] + 2 ATP + 2 H2O. It functions in the pathway porphyrin-containing compound metabolism; bacteriochlorophyll biosynthesis (light-independent). Its function is as follows. Component of the dark-operative protochlorophyllide reductase (DPOR) that uses Mg-ATP and reduced ferredoxin to reduce ring D of protochlorophyllide (Pchlide) to form chlorophyllide a (Chlide). This reaction is light-independent. The L component serves as a unique electron donor to the NB-component of the complex, and binds Mg-ATP. This chain is Light-independent protochlorophyllide reductase iron-sulfur ATP-binding protein, found in Methylorubrum extorquens (strain PA1) (Methylobacterium extorquens).